A 565-amino-acid chain; its full sequence is Deoxyribodipyrimidine photo-lyase, mitochondrial (565 aa).

One can recognise a Photolyase/cryptochrome alpha/beta domain in the interval 75–226 (STVMHWFRND…QLKYYHDSCI (152 aa)). FAD is bound by residues Y326 and 338–342 (TSGLS). 2 interaction with DNA regions span residues 384-391 (EVAWRDFY) and 451-452 (NR). Position 482-484 (482-484 (DGD)) interacts with FAD. Q514 provides a ligand contact to DNA.

This sequence belongs to the DNA photolyase class-1 family. In terms of assembly, monomer. Requires FAD as cofactor. (6R)-5,10-methylene-5,6,7,8-tetrahydrofolate is required as a cofactor.

Its subcellular location is the nucleus. It is found in the mitochondrion. The catalysed reaction is cyclobutadipyrimidine (in DNA) = 2 pyrimidine residues (in DNA).. Functionally, involved in repair of UV radiation-induced DNA damage. Catalyzes the light-dependent monomerization (300-600 nm) of cyclobutyl pyrimidine dimers (in cis-syn configuration), which are formed between adjacent bases on the same DNA strand upon exposure to ultraviolet radiation. The chain is Deoxyribodipyrimidine photo-lyase, mitochondrial (PHR1) from Saccharomyces cerevisiae (strain ATCC 204508 / S288c) (Baker's yeast).